The sequence spans 914 residues: Valine--tRNA ligase (914 aa).

The 'HIGH' region signature appears at 47 to 57 (PYPTGELHMGH). A 'KMSKS' region motif is present at residues 552–556 (KMSKS). Residue K555 coordinates ATP.

This sequence belongs to the class-I aminoacyl-tRNA synthetase family. ValS type 2 subfamily.

The protein resides in the cytoplasm. It catalyses the reaction tRNA(Val) + L-valine + ATP = L-valyl-tRNA(Val) + AMP + diphosphate. Functionally, catalyzes the attachment of valine to tRNA(Val). As ValRS can inadvertently accommodate and process structurally similar amino acids such as threonine, to avoid such errors, it has a 'posttransfer' editing activity that hydrolyzes mischarged Thr-tRNA(Val) in a tRNA-dependent manner. This Methanopyrus kandleri (strain AV19 / DSM 6324 / JCM 9639 / NBRC 100938) protein is Valine--tRNA ligase.